The primary structure comprises 292 residues: Zinc finger protein SNAI3 (292 aa).

Residues 1 to 20 are SNAG domain; the sequence is MPRSFLVKTHSSHRVPNYRR. C2H2-type zinc fingers lie at residues 152-174, 183-205, 209-231, and 237-259; these read FECF…RQLH, FTCK…IRTH, CTCK…VRTH, and YACS…LQTH. Residues 265–287 form a C2H2-type 5; degenerate zinc finger; sequence YRCRRCTKTFSRMSLLARHEESG.

It belongs to the snail C2H2-type zinc-finger protein family.

The protein localises to the nucleus. In terms of biological role, seems to inhibit myoblast differentiation. Transcriptional repressor of E-box-dependent transactivation of downstream myogenic bHLHs genes. Binds preferentially to the canonical E-box sequences 5'-CAGGTG-3' and 5'-CACCTG-3'. The polypeptide is Zinc finger protein SNAI3 (SNAI3) (Homo sapiens (Human)).